The following is a 255-amino-acid chain: MNTARLNQGTPLLLNAVSKHYAENIVLNQLDLHIPAGQFVAVVGRSGGGKSTLLRLLAGLETPTAGDVLAGTTPLAEIQDDTRMMFQDARLLPWKSVIDNVGLGLKGQWRDAARQALAAVGLENRAGEWPAALSGGQKQRVALARALIHRPGLLLLDEPLGALDALTRLEMQDLIVSLWQEHGFTVLLVTHDVSEAVAMADRVLLIEEGKIGLDLTVDIPRPRRLGSVRLAELEAEVLQRVMQRGHSEQPIRRHG.

The 222-residue stretch at L12 to L233 folds into the ABC transporter domain. G44–S51 contacts ATP.

The protein belongs to the ABC transporter superfamily. Aliphatic sulfonates importer (TC 3.A.1.17.2) family. As to quaternary structure, the complex is composed of two ATP-binding proteins (SsuB), two transmembrane proteins (SsuC) and a solute-binding protein (SsuA).

The protein resides in the cell inner membrane. The enzyme catalyses ATP + H2O + aliphatic sulfonate-[sulfonate-binding protein]Side 1 = ADP + phosphate + aliphatic sulfonateSide 2 + [sulfonate-binding protein]Side 1.. Functionally, part of the ABC transporter complex SsuABC involved in aliphatic sulfonates import. Responsible for energy coupling to the transport system. The protein is Aliphatic sulfonates import ATP-binding protein SsuB of Escherichia coli O1:K1 / APEC.